The following is a 445-amino-acid chain: Phosphoglucosamine mutase (445 aa).

Ser-102 functions as the Phosphoserine intermediate in the catalytic mechanism. Mg(2+)-binding residues include Ser-102, Asp-241, Asp-243, and Asp-245. Phosphoserine is present on Ser-102.

The protein belongs to the phosphohexose mutase family. The cofactor is Mg(2+). Activated by phosphorylation.

It carries out the reaction alpha-D-glucosamine 1-phosphate = D-glucosamine 6-phosphate. Its function is as follows. Catalyzes the conversion of glucosamine-6-phosphate to glucosamine-1-phosphate. This chain is Phosphoglucosamine mutase, found in Shewanella sp. (strain ANA-3).